We begin with the raw amino-acid sequence, 304 residues long: Methionyl-tRNA formyltransferase (304 aa).

(6S)-5,6,7,8-tetrahydrofolate is bound at residue 109 to 112 (SDLP).

Belongs to the Fmt family.

The catalysed reaction is L-methionyl-tRNA(fMet) + (6R)-10-formyltetrahydrofolate = N-formyl-L-methionyl-tRNA(fMet) + (6S)-5,6,7,8-tetrahydrofolate + H(+). In terms of biological role, attaches a formyl group to the free amino group of methionyl-tRNA(fMet). The formyl group appears to play a dual role in the initiator identity of N-formylmethionyl-tRNA by promoting its recognition by IF2 and preventing the misappropriation of this tRNA by the elongation apparatus. This chain is Methionyl-tRNA formyltransferase, found in Rickettsia bellii (strain RML369-C).